The primary structure comprises 499 residues: Increased recombination centers protein 15 (499 aa).

Residue 47-56 participates in FAD binding; the sequence is DQRASLGGAY.

This sequence belongs to the class-I pyridine nucleotide-disulfide oxidoreductase family.

The protein localises to the cytoplasm. The sequence is that of Increased recombination centers protein 15 (IRC15) from Saccharomyces cerevisiae (strain ATCC 204508 / S288c) (Baker's yeast).